A 1404-amino-acid polypeptide reads, in one-letter code: DNA-directed RNA polymerase subunit beta' (1404 aa).

Cysteine 70, cysteine 72, cysteine 85, and cysteine 88 together coordinate Zn(2+). Aspartate 460, aspartate 462, and aspartate 464 together coordinate Mg(2+). Cysteine 814, cysteine 888, cysteine 895, and cysteine 898 together coordinate Zn(2+).

Belongs to the RNA polymerase beta' chain family. In terms of assembly, the RNAP catalytic core consists of 2 alpha, 1 beta, 1 beta' and 1 omega subunit. When a sigma factor is associated with the core the holoenzyme is formed, which can initiate transcription. It depends on Mg(2+) as a cofactor. Zn(2+) serves as cofactor.

It carries out the reaction RNA(n) + a ribonucleoside 5'-triphosphate = RNA(n+1) + diphosphate. In terms of biological role, DNA-dependent RNA polymerase catalyzes the transcription of DNA into RNA using the four ribonucleoside triphosphates as substrates. The sequence is that of DNA-directed RNA polymerase subunit beta' from Buchnera aphidicola subsp. Baizongia pistaciae (strain Bp).